Here is a 259-residue protein sequence, read N- to C-terminus: Sesquipedalian-2 (259 aa).

Residues 17–121 enclose the PH domain; it reads PADHTGFLRS…WVKALSRASF (105 aa). Residues 124–150 are a coiled coil; that stretch reads MRLVVRELESQLQDARQSLALHRCASQ. Residues 155 to 178 form a disordered region; the sequence is SCSKSQAPDHRAPDPENGHFLPRD. The segment covering 161-178 has biased composition (basic and acidic residues); sequence APDHRAPDPENGHFLPRD. Positions 223-235 match the F&amp;H motif; it reads CFSTLHDWYGKEI.

Belongs to the sesquipedalian family. Forms homodimers and heterodimers with PHETA1. Interacts with OCRL and INPP5B.

Its subcellular location is the early endosome. It localises to the recycling endosome. The protein localises to the golgi apparatus. The protein resides in the trans-Golgi network. It is found in the cytoplasmic vesicle. Its subcellular location is the clathrin-coated vesicle. Plays a role in endocytic trafficking. Required for receptor recycling from endosomes, both to the trans-Golgi network and the plasma membrane. The chain is Sesquipedalian-2 from Mus musculus (Mouse).